A 269-amino-acid chain; its full sequence is Shikimate dehydrogenase (NADP(+)) (269 aa).

Shikimate is bound by residues 17 to 19 (SKS) and T64. The active-site Proton acceptor is the K68. Position 80 (E80) interacts with NADP(+). Residues N89 and D105 each coordinate shikimate. NADP(+)-binding positions include 130-134 (GAGGA), 154-159 (NRTHAK), and M213. Residue Y215 participates in shikimate binding. G237 is a binding site for NADP(+).

This sequence belongs to the shikimate dehydrogenase family. In terms of assembly, homodimer.

The catalysed reaction is shikimate + NADP(+) = 3-dehydroshikimate + NADPH + H(+). It functions in the pathway metabolic intermediate biosynthesis; chorismate biosynthesis; chorismate from D-erythrose 4-phosphate and phosphoenolpyruvate: step 4/7. In terms of biological role, involved in the biosynthesis of the chorismate, which leads to the biosynthesis of aromatic amino acids. Catalyzes the reversible NADPH linked reduction of 3-dehydroshikimate (DHSA) to yield shikimate (SA). This is Shikimate dehydrogenase (NADP(+)) from Neisseria pharyngis.